We begin with the raw amino-acid sequence, 595 residues long: Actin-histidine N-methyltransferase (595 aa).

Positions 1-22 (MGKKSRVKTQKSGTGATATVSP) are disordered. Positions 10-20 (QKSGTGATATV) are enriched in polar residues. Residues R75, 104-106 (EGF), R254, 275-279 (DMCNH), and 325-327 (SGF) contribute to the S-adenosyl-L-methionine site. Residues 94-314 (EGFEMVNFKE…AGEQIYIFYG (221 aa)) form the SET domain. S513 is subject to Phosphoserine. Residues 549–572 (ENGLVNGENSVPNGTRSENENLNQ) are compositionally biased toward polar residues. The disordered stretch occupies residues 549-595 (ENGLVNGENSVPNGTRSENENLNQEESKRAVEDAKGSSSDNTAEVKE). The segment covering 573–583 (EESKRAVEDAK) has biased composition (basic and acidic residues). Residues 584–595 (GSSSDNTAEVKE) are compositionally biased toward polar residues.

The protein belongs to the class V-like SAM-binding methyltransferase superfamily. SETD3 actin-histidine methyltransferase family. Interacts with MYOD1. Phosphorylated by GSK3B, which is required for recognition by the SCF(FBXW7) complex and subsequent degradation. In terms of processing, ubiquitinated by the SCF(FBXW7) complex following phosphorylation by GSK3B, leading to its degradation by the proteasome.

It is found in the cytoplasm. Its subcellular location is the nucleus. The catalysed reaction is L-histidyl-[protein] + S-adenosyl-L-methionine = N(tele)-methyl-L-histidyl-[protein] + S-adenosyl-L-homocysteine + H(+). Functionally, protein-histidine N-methyltransferase that specifically mediates 3-methylhistidine (tele-methylhistidine) methylation of actin at 'His-73'. Histidine methylation of actin is required for smooth muscle contraction of the laboring uterus during delivery. Does not have protein-lysine N-methyltransferase activity and probably only catalyzes histidine methylation of actin. The polypeptide is Actin-histidine N-methyltransferase (Papio anubis (Olive baboon)).